The chain runs to 394 residues: MSKEKFERTKPHCNIGTIGHVDHGKTTLTAAITKVLSETGGAVFTDYDQIDKAPEEKKRGITISTSHVEYETTKRHYAHIDCPGHEDYVKNMITGAAQMDGAILVVSAVDGPMPQTREHILLSRQVGVPSLVVFLNKVDMVNDPEMLDLVEMEVRELLLSYKYPGDEIPIIRGSALKALQGEIEYKKSILKLMEAVDNYIPQPERSFDRPFLMPVEDVFSIAGRGTVVTGRVEQGQIKIGDAVEIIGLGSTVKTTCTGIEMFHKLLDYGQAGDNLGMLIRGIQRDAVQRGQVICAPGSVKPHTKYEAQVYILTKEEGGRHKPFFNNYRPQFFFRTADVTGTIQLPKDVEMVNPGDNVKLIIELITPIAMEEGIRFAMREGGRTIGAGVVSKIIE.

The tr-type G domain occupies Lys10 to Glu204. The G1 stretch occupies residues Gly19 to Thr26. A GTP-binding site is contributed by Gly19–Thr26. Residues Gly60–Ser64 form a G2 region. The interval Asp81–Gly84 is G3. GTP contacts are provided by residues Asp81–His85 and Asn136–Asp139. Positions Asn136–Asp139 are G4. Positions Ser174–Leu176 are G5.

It belongs to the TRAFAC class translation factor GTPase superfamily. Classic translation factor GTPase family. EF-Tu/EF-1A subfamily.

The protein localises to the mitochondrion. This protein promotes the GTP-dependent binding of aminoacyl-tRNA to the A-site of ribosomes during protein biosynthesis. This Reclinomonas americana protein is Elongation factor Tu, mitochondrial (TUFA).